The chain runs to 243 residues: Ribosomal RNA small subunit methyltransferase G (243 aa).

S-adenosyl-L-methionine contacts are provided by residues Gly80, Phe85, 132–133 (IE), and Arg151.

It belongs to the methyltransferase superfamily. RNA methyltransferase RsmG family.

Its subcellular location is the cytoplasm. In terms of biological role, specifically methylates the N7 position of a guanine in 16S rRNA. The sequence is that of Ribosomal RNA small subunit methyltransferase G from Synechococcus sp. (strain CC9902).